Reading from the N-terminus, the 154-residue chain is Pro-corazonin (154 aa).

The N-terminal stretch at 1-19 is a signal peptide; sequence MLRLLLLPLFLFTLSMCMG. Glutamine 20 carries the pyrrolidone carboxylic acid modification. Asparagine 30 carries the asparagine amide modification. A propeptide spanning residues 70–154 is cleaved from the precursor; sequence LERCLSQLQR…SAEPNVFGKH (85 aa).

It belongs to the corazonin family. In terms of tissue distribution, expression is restricted to 24 neurons in the larval CNS (8 in the brain and 16 in the ventral nerve cord) and 12-16 neurons in the pars lateralis of the adult brain.

Its subcellular location is the secreted. In terms of biological role, cardioactive peptide. Corazonin is probably involved in the physiological regulation of the heart beat. Clock (Clk) and cycle (cyc) proteins negatively regulate Crz transcription in a cell-specific manner. This Drosophila simulans (Fruit fly) protein is Pro-corazonin (Crz).